Consider the following 277-residue polypeptide: S-formylglutathione hydrolase FrmB (277 aa).

Catalysis depends on charge relay system residues S145, D221, and H254.

This sequence belongs to the esterase D family.

It catalyses the reaction S-formylglutathione + H2O = formate + glutathione + H(+). Its function is as follows. Serine hydrolase involved in the detoxification of formaldehyde. Hydrolyzes S-formylglutathione to glutathione and formate. This is S-formylglutathione hydrolase FrmB (frmB) from Escherichia coli (strain K12 / DH10B).